A 439-amino-acid polypeptide reads, in one-letter code: Glutamate-1-semialdehyde 2,1-aminomutase (439 aa).

Lys270 carries the N6-(pyridoxal phosphate)lysine modification.

This sequence belongs to the class-III pyridoxal-phosphate-dependent aminotransferase family. HemL subfamily. Homodimer. Requires pyridoxal 5'-phosphate as cofactor.

The protein resides in the cytoplasm. The catalysed reaction is (S)-4-amino-5-oxopentanoate = 5-aminolevulinate. It functions in the pathway porphyrin-containing compound metabolism; protoporphyrin-IX biosynthesis; 5-aminolevulinate from L-glutamyl-tRNA(Glu): step 2/2. The chain is Glutamate-1-semialdehyde 2,1-aminomutase from Kocuria rhizophila (strain ATCC 9341 / DSM 348 / NBRC 103217 / DC2201).